The chain runs to 431 residues: Glucose-1-phosphate adenylyltransferase (431 aa).

K39 is a binding site for beta-D-fructose 1,6-bisphosphate. AMP contacts are provided by R40, H46, and R52. Residue Y114 participates in alpha-D-glucose 1-phosphate binding. R130 contacts AMP. Alpha-D-glucose 1-phosphate-binding positions include G179, 194–195 (EK), and S212. AMP-binding residues include E370 and R386. Residues 419–423 (REMLR) and 429–431 (QER) contribute to the beta-D-fructose 1,6-bisphosphate site.

The protein belongs to the bacterial/plant glucose-1-phosphate adenylyltransferase family. Homotetramer.

It catalyses the reaction alpha-D-glucose 1-phosphate + ATP + H(+) = ADP-alpha-D-glucose + diphosphate. Its pathway is glycan biosynthesis; glycogen biosynthesis. With respect to regulation, allosterically activated by fructose-1,6-bisphosphate (F16BP) and inhibited by AMP. Involved in the biosynthesis of ADP-glucose, a building block required for the elongation reactions to produce glycogen. Catalyzes the reaction between ATP and alpha-D-glucose 1-phosphate (G1P) to produce pyrophosphate and ADP-Glc. In Escherichia coli O45:K1 (strain S88 / ExPEC), this protein is Glucose-1-phosphate adenylyltransferase.